We begin with the raw amino-acid sequence, 274 residues long: uncharacterized protein (274 aa).

This is an uncharacterized protein from Bacillus subtilis (strain 168).